The primary structure comprises 254 residues: Allene oxide cyclase 1, chloroplastic (254 aa).

Residues Met-1 to Arg-78 constitute a chloroplast transit peptide. Low complexity predominate over residues Ser-44–Thr-56. A disordered region spans residues Ser-44–Pro-79. Polar residues predominate over residues Arg-65–Pro-77.

The protein belongs to the allene oxide cyclase family. Highly expressed in fully developed leaves.

The protein localises to the plastid. Its subcellular location is the chloroplast. It carries out the reaction (9Z,13S,15Z)-12,13-epoxyoctadeca-9,11,15-trienoate = (9S,13S,15Z)-12-oxophyto-10,15-dienoate. In terms of biological role, involved in the production of 12-oxo-phytodienoic acid (OPDA), a precursor of jasmonic acid. This chain is Allene oxide cyclase 1, chloroplastic (AOC1), found in Arabidopsis thaliana (Mouse-ear cress).